The following is a 47-amino-acid chain: Type II secretion system protein N (47 aa).

This sequence belongs to the GSP N family.

It localises to the cell inner membrane. In terms of biological role, involved in a type II secretion system (T2SS, formerly general secretion pathway, GSP) for the export of proteins. This chain is Type II secretion system protein N (exeN), found in Aeromonas salmonicida.